The following is a 504-amino-acid chain: Maturase K (504 aa).

It belongs to the intron maturase 2 family. MatK subfamily.

The protein resides in the plastid. The protein localises to the chloroplast. In terms of biological role, usually encoded in the trnK tRNA gene intron. Probably assists in splicing its own and other chloroplast group II introns. The sequence is that of Maturase K from Quercus robur (English oak).